Consider the following 490-residue polypeptide: MEKSHRVCKNCVANHYWLHMDNHGKSFIKVMITDFKNGVTIPAKFARNFGGQMSGTVKLETRNGKTYEVQVAKELNNLVLRSGWERFASAYELEKGDILVFIYSGNSHFKVWIYDPSACEKGLPCIITEQLPRVQQRSISHNNHTQLKRNAKSAKLYVDSSGHSKETSEINPANSPSWKPTERVPSSEELDEPVDLANVQKATKSFYSLPRMCNMTSAQKAEVDALEKRIKPQIPFYITVMDKASATDGLLAISKDYAVSYLLDKNETIKLCHSGRSMTWDISLDIDTDDQYALSTGWLDFIRNNHLQEGDICVFEASKNKRGVALIFHPLKQSHHPKPPGCVPSTKFPRHGVSKPNYIVSRFTTLSGQLKIKVEAKVQAIQSEIPIFVAVMRESFIRGRSRYMCFSAKYAAKYLPREKNKIMRLRLPNKSYKYKAVFKINNKVHKLGGGWGKFVDDNKIKLGDICLFQLMKNKKKLMMMVHIIRKSEFC.

A DNA-binding region (TF-B3 1) is located at residues glycine 24 to serine 117. The segment at serine 161 to aspartate 191 is disordered. The span at glutamate 169–tryptophan 178 shows a compositional bias: polar residues. 2 consecutive DNA-binding regions (TF-B3) follow at residues phenylalanine 236–leucine 331 and valine 389–serine 487.

It is found in the nucleus. The polypeptide is B3 domain-containing protein LOC_Os12g40080 (Oryza sativa subsp. japonica (Rice)).